We begin with the raw amino-acid sequence, 282 residues long: Thiazole synthase (282 aa).

The active-site Schiff-base intermediate with DXP is lysine 113. 1-deoxy-D-xylulose 5-phosphate contacts are provided by residues glycine 174, 201-202 (AG), and 223-224 (NT).

The protein belongs to the ThiG family. In terms of assembly, homotetramer. Forms heterodimers with either ThiH or ThiS.

Its subcellular location is the cytoplasm. It catalyses the reaction [ThiS sulfur-carrier protein]-C-terminal-Gly-aminoethanethioate + 2-iminoacetate + 1-deoxy-D-xylulose 5-phosphate = [ThiS sulfur-carrier protein]-C-terminal Gly-Gly + 2-[(2R,5Z)-2-carboxy-4-methylthiazol-5(2H)-ylidene]ethyl phosphate + 2 H2O + H(+). It functions in the pathway cofactor biosynthesis; thiamine diphosphate biosynthesis. In terms of biological role, catalyzes the rearrangement of 1-deoxy-D-xylulose 5-phosphate (DXP) to produce the thiazole phosphate moiety of thiamine. Sulfur is provided by the thiocarboxylate moiety of the carrier protein ThiS. In vitro, sulfur can be provided by H(2)S. This is Thiazole synthase from Cupriavidus metallidurans (strain ATCC 43123 / DSM 2839 / NBRC 102507 / CH34) (Ralstonia metallidurans).